The following is a 583-amino-acid chain: Threonine--tRNA ligase (583 aa).

Positions 185–478 (DHRKLGRELN…LVEHYGGAFP (294 aa)) are catalytic. Zn(2+) is bound by residues cysteine 278, histidine 329, and histidine 455.

This sequence belongs to the class-II aminoacyl-tRNA synthetase family. As to quaternary structure, homodimer. Zn(2+) serves as cofactor.

The protein resides in the cytoplasm. The catalysed reaction is tRNA(Thr) + L-threonine + ATP = L-threonyl-tRNA(Thr) + AMP + diphosphate + H(+). Functionally, catalyzes the attachment of threonine to tRNA(Thr) in a two-step reaction: L-threonine is first activated by ATP to form Thr-AMP and then transferred to the acceptor end of tRNA(Thr). Also edits incorrectly charged L-seryl-tRNA(Thr). The protein is Threonine--tRNA ligase of Borrelia recurrentis (strain A1).